A 252-amino-acid polypeptide reads, in one-letter code: 3-dehydroquinate dehydratase (252 aa).

3-dehydroquinate-binding positions include serine 21, 46–48 (EWR), and arginine 82. Histidine 143 acts as the Proton donor/acceptor in catalysis. Residue lysine 170 is the Schiff-base intermediate with substrate of the active site. Residues arginine 213, serine 232, and glutamine 236 each contribute to the 3-dehydroquinate site.

The protein belongs to the type-I 3-dehydroquinase family. In terms of assembly, homodimer.

It catalyses the reaction 3-dehydroquinate = 3-dehydroshikimate + H2O. It participates in metabolic intermediate biosynthesis; chorismate biosynthesis; chorismate from D-erythrose 4-phosphate and phosphoenolpyruvate: step 3/7. Functionally, involved in the third step of the chorismate pathway, which leads to the biosynthesis of aromatic amino acids. Catalyzes the cis-dehydration of 3-dehydroquinate (DHQ) and introduces the first double bond of the aromatic ring to yield 3-dehydroshikimate. The polypeptide is 3-dehydroquinate dehydratase (Salmonella agona (strain SL483)).